Consider the following 442-residue polypeptide: DMATS-type prenyltransferase mfmD (442 aa).

The protein belongs to the tryptophan dimethylallyltransferase family.

The protein operates within secondary metabolite biosynthesis; terpenoid biosynthesis. In terms of biological role, prenyltransferase; part of the gene cluster that mediates the biosynthesis of the phthalide-terpenoid hybrid 11'-O-desmethylfendlerol. Within the pathway, mfmD is responsible for farnesylation of the cyclopolic acid intermediate via an O-prenylation reaction. The biosynthesis of 11'-O-desmethylfendlerol begins with the NR-PKS mfmB that forms 3,5-dimethylorsellinic acid (DMOA), which is then transformed into the phthalide 5,7-dihydroxy-4-(hydroxymethyl)-6-methylphthalide by the cytochrome P450 monooxygenase mfmA and the hydrolase mfmC. Subsequently, the methyltransferase mfmE catalyzes 7-O-methylation to yield 5-hydroxy-4-(hydroxymethyl)-7-methoxy-6-methylphthalide, which undergoes C-3 hydroxylation by the cytochrome P450 monooxygenase mfmF. The resultant cyclopolic acid (2,5-dihydroxy-4-(hydroxymethyl)-7-methoxy-6-methylphthalide) is then farnesylated by the DMATS-type prenyltransferase mfmD to afford 5-O-farnesylcyclopolic acid. Finally, the Pyr4-family terpene cyclase mfmH cyclizes the farnesyl moiety of 5-O-farnesylcyclopolic acid into a drimane-like structure, thus completing the biosynthesis of 11'-O-desmethylfendlerol. This Annulohypoxylon moriforme (Filamentous fungus) protein is DMATS-type prenyltransferase mfmD.